The following is a 447-amino-acid chain: Tubulin beta-2 chain (447 aa).

Positions 11, 69, 138, 142, 143, 144, 204, and 226 each coordinate GTP. E69 contributes to the Mg(2+) binding site. Over residues 419 to 428 (VSEYQQYQDA) the composition is skewed to polar residues. The disordered stretch occupies residues 419–447 (VSEYQQYQDATSDEEGEYEDEDQEPEEDM). Over residues 429–447 (TSDEEGEYEDEDQEPEEDM) the composition is skewed to acidic residues.

This sequence belongs to the tubulin family. In terms of assembly, dimer of alpha and beta chains. A typical microtubule is a hollow water-filled tube with an outer diameter of 25 nm and an inner diameter of 15 nM. Alpha-beta heterodimers associate head-to-tail to form protofilaments running lengthwise along the microtubule wall with the beta-tubulin subunit facing the microtubule plus end conferring a structural polarity. Microtubules usually have 13 protofilaments but different protofilament numbers can be found in some organisms and specialized cells. Mg(2+) serves as cofactor.

Its subcellular location is the cytoplasm. It localises to the cytoskeleton. Its function is as follows. Tubulin is the major constituent of microtubules, a cylinder consisting of laterally associated linear protofilaments composed of alpha- and beta-tubulin heterodimers. Microtubules grow by the addition of GTP-tubulin dimers to the microtubule end, where a stabilizing cap forms. Below the cap, tubulin dimers are in GDP-bound state, owing to GTPase activity of alpha-tubulin. This Triticum aestivum (Wheat) protein is Tubulin beta-2 chain (TUBB2).